Here is a 195-residue protein sequence, read N- to C-terminus: 3-isopropylmalate dehydratase small subunit (195 aa).

The protein belongs to the LeuD family. LeuD type 1 subfamily. Heterodimer of LeuC and LeuD.

It carries out the reaction (2R,3S)-3-isopropylmalate = (2S)-2-isopropylmalate. It participates in amino-acid biosynthesis; L-leucine biosynthesis; L-leucine from 3-methyl-2-oxobutanoate: step 2/4. In terms of biological role, catalyzes the isomerization between 2-isopropylmalate and 3-isopropylmalate, via the formation of 2-isopropylmaleate. In Koribacter versatilis (strain Ellin345), this protein is 3-isopropylmalate dehydratase small subunit.